The following is a 326-amino-acid chain: E3 ubiquitin-protein ligase SINAT3 (326 aa).

The tract at residues 1-44 is disordered; that stretch reads MDLDSMDCTSTMDVTDDEEIHQDRHSYASVSKHHHTNNNTTNVN. The segment at 63 to 99 adopts an RING-type zinc-finger fold; sequence CPVCTNSMYPPIHQCHNGHTLCSTCKARVHNRCPTCR. Residues 113 to 306 form an SBD region; that stretch reads VAESLELPCK…KELKLRVTGR (194 aa). An SIAH-type zinc finger spans residues 116 to 176; it reads SLELPCKHMS…LVAHLRDDHK (61 aa). Cys-121, Cys-128, His-140, Cys-144, Cys-151, Cys-158, His-170, and His-175 together coordinate Zn(2+).

Belongs to the SINA (Seven in absentia) family. Interacts with SINAT6. Interacts with WAV3. Interacts with FREE1. Interacts with ELC/VPS23A.

The protein localises to the endosome. Its subcellular location is the multivesicular body. The protein resides in the cytoplasmic vesicle. It localises to the autophagosome. The enzyme catalyses S-ubiquitinyl-[E2 ubiquitin-conjugating enzyme]-L-cysteine + [acceptor protein]-L-lysine = [E2 ubiquitin-conjugating enzyme]-L-cysteine + N(6)-ubiquitinyl-[acceptor protein]-L-lysine.. Its pathway is protein modification; protein ubiquitination. In terms of biological role, E3 ubiquitin-protein ligase that mediates ubiquitination and subsequent proteasomal degradation of target proteins. E3 ubiquitin ligases accept ubiquitin from an E2 ubiquitin-conjugating enzyme in the form of a thioester and then directly transfers the ubiquitin to targeted substrates. It probably triggers the ubiquitin-mediated degradation of different substrates. Modulates directly the ubiquitination and proteasomal-dependent degradation of FREE1, a component of the ESCRT-I complex. Modulates directly the ubiquitination and proteasomal-dependent degradation of ELC/VPS23A, a component of the ESCRT-I complex. The chain is E3 ubiquitin-protein ligase SINAT3 from Arabidopsis thaliana (Mouse-ear cress).